A 611-amino-acid chain; its full sequence is Brain-enriched guanylate kinase-associated protein (611 aa).

Position 156 is a phosphotyrosine (Tyr-156). Phosphoserine is present on residues Ser-219, Ser-248, and Ser-265. The residue at position 268 (Thr-268) is a Phosphothreonine. Phosphoserine is present on residues Ser-284, Ser-364, and Ser-391. An Asymmetric dimethylarginine modification is found at Arg-399. Residues Ser-474, Ser-484, Ser-494, Ser-496, Ser-519, Ser-521, and Ser-525 each carry the phosphoserine modification. The interval Leu-520–Asn-611 is disordered. A compositionally biased stretch (basic and acidic residues) spans Glu-554 to Leu-563. Residues Ser-571 and Ser-581 each carry the phosphoserine modification.

In terms of assembly, interacts with DLG4 and DLGAP1 and forms a ternary complex. Brain-specific. Expressed in neurons and rather enriched at synaptic junctions.

It is found in the cytoplasm. Its subcellular location is the membrane. Its function is as follows. May sustain the structure of the postsynaptic density (PSD). The chain is Brain-enriched guanylate kinase-associated protein (Begain) from Rattus norvegicus (Rat).